The sequence spans 369 residues: Chaperone protein DnaJ (369 aa).

Residues 7–73 form the J domain; sequence DYYEILGVPR…QKRAMYDRFG (67 aa). The CR-type zinc-finger motif lies at 143 to 225; that stretch reads GAEIPVEYER…CGGSGRVLRK (83 aa). Zn(2+) contacts are provided by Cys-156, Cys-159, Cys-173, Cys-176, Cys-199, Cys-202, Cys-213, and Cys-216. CXXCXGXG motif repeat units lie at residues 156–163, 173–180, 199–206, and 213–220; these read CPRCGGTG, CPSCGGTG, CERCGGTG, and CHECGGSG.

This sequence belongs to the DnaJ family. Homodimer. Requires Zn(2+) as cofactor.

It is found in the cytoplasm. Participates actively in the response to hyperosmotic and heat shock by preventing the aggregation of stress-denatured proteins and by disaggregating proteins, also in an autonomous, DnaK-independent fashion. Unfolded proteins bind initially to DnaJ; upon interaction with the DnaJ-bound protein, DnaK hydrolyzes its bound ATP, resulting in the formation of a stable complex. GrpE releases ADP from DnaK; ATP binding to DnaK triggers the release of the substrate protein, thus completing the reaction cycle. Several rounds of ATP-dependent interactions between DnaJ, DnaK and GrpE are required for fully efficient folding. Also involved, together with DnaK and GrpE, in the DNA replication of plasmids through activation of initiation proteins. This is Chaperone protein DnaJ from Thermotoga sp. (strain RQ2).